The primary structure comprises 241 residues: Carboxy-S-adenosyl-L-methionine synthase (241 aa).

Residues Y38, 63-65 (GCS), 88-89 (DN), 116-117 (DI), N131, and R198 each bind S-adenosyl-L-methionine.

Belongs to the class I-like SAM-binding methyltransferase superfamily. Cx-SAM synthase family. Homodimer.

The catalysed reaction is prephenate + S-adenosyl-L-methionine = carboxy-S-adenosyl-L-methionine + 3-phenylpyruvate + H2O. Catalyzes the conversion of S-adenosyl-L-methionine (SAM) to carboxy-S-adenosyl-L-methionine (Cx-SAM). This is Carboxy-S-adenosyl-L-methionine synthase from Histophilus somni (strain 129Pt) (Haemophilus somnus).